The sequence spans 1003 residues: DNA topoisomerase 3-alpha (1003 aa).

The Toprim domain maps to 35 to 179; sequence KVLCVAEKND…NLRVLRARFS (145 aa). One can recognise a Topo IA-type catalytic domain in the interval 197-617; the sequence is DQRVSDAVDV…QQVQKYKQVF (421 aa). Tyr-362 acts as the O-(5'-phospho-DNA)-tyrosine intermediate in catalysis. Positions 400-426 are disordered; that stretch reads GGPTPRNGSKSDQAHPPIHPTKYTSGL. A C4-type zinc finger spans residues 658 to 685; that stretch reads CPQCNKDMVLKTKKSGGFYLSCMGFPEC. Zn(2+) is bound by residues Cys-815, Cys-817, Cys-840, and Cys-845. The GRF-type 1 zinc-finger motif lies at 815–854; it reads CNCGREAVLLTVRKQGPNQGRHFYKCSNGDCNFFLWADSS. The disordered stretch occupies residues 856–888; that stretch reads STGGGTPTSASGPPGSSVGCPSSVGSHMDGFGS. Low complexity predominate over residues 862 to 888; the sequence is PTSASGPPGSSVGCPSSVGSHMDGFGS. Zn(2+)-binding residues include Cys-899, Cys-901, Cys-924, and Cys-932. The segment at 899 to 941 adopts a GRF-type 2 zinc-finger fold; sequence CLCGQPAVTRTVQKDGPNKGRQFHTCAKPREQQCGFFQWVDEN. The interval 946–991 is disordered; the sequence is SFAAPAWPGGRGKAQRPEAASKRPRAGSSDAGSTVKKPRKCSLCHQ.

The protein belongs to the type IA topoisomerase family. Binds ssDNA. Interacts (via N-terminal region) with BLM; the interaction is direct. Directly interacts with RMI1. Component of the RMI complex, containing at least TOP3A, RMI1 and RMI2. The RMI complex interacts with BLM. It depends on Mg(2+) as a cofactor. As to expression, highly expressed in testis.

It is found in the mitochondrion matrix. It catalyses the reaction ATP-independent breakage of single-stranded DNA, followed by passage and rejoining.. In terms of biological role, releases the supercoiling and torsional tension of DNA introduced during the DNA replication and transcription by transiently cleaving and rejoining one strand of the DNA duplex. Introduces a single-strand break via transesterification at a target site in duplex DNA. The scissile phosphodiester is attacked by the catalytic tyrosine of the enzyme, resulting in the formation of a DNA-(5'-phosphotyrosyl)-enzyme intermediate and the expulsion of a 3'-OH DNA strand. The free DNA strand then undergoes passage around the unbroken strand thus removing DNA supercoils. Finally, in the religation step, the DNA 3'-OH attacks the covalent intermediate to expel the active-site tyrosine and restore the DNA phosphodiester backbone. As an essential component of the RMI complex it is involved in chromosome separation and the processing of homologous recombination intermediates to limit DNA crossover formation in cells. Has DNA decatenation activity. It is required for mtDNA decatenation and segregation after completion of replication, in a process that does not require BLM, RMI1 and RMI2. This chain is DNA topoisomerase 3-alpha (Top3a), found in Mus musculus (Mouse).